Here is a 776-residue protein sequence, read N- to C-terminus: Systemic RNA interference defective protein 1 (776 aa).

The first 17 residues, 1-17 (MIRVYLIILMHLVIGLT), serve as a signal peptide directing secretion. At 18–319 (QNNSTTPSPI…ENQSYAVPTA (302 aa)) the chain is on the extracellular side. N-linked (GlcNAc...) asparagine glycosylation is found at asparagine 19, asparagine 20, asparagine 32, asparagine 205, asparagine 210, asparagine 234, asparagine 290, and asparagine 311. The interval 22 to 312 (TTPSPIITSS…SFEFKKLENQ (291 aa)) is involved in dsRNA-binding. The helical transmembrane segment at 320–340 (LMMIFLTTPCLLFLPIVINII) threads the bilayer. Topologically, residues 341–429 (KNSRKLAPSQ…KQDSLSLHGQ (89 aa)) are cytoplasmic. The interval 360–390 (PSEQRDMDLSHDEQQNTSSELENNGEIPAAE) is disordered. A compositionally biased stretch (basic and acidic residues) spans 362–373 (EQRDMDLSHDEQ). The helical transmembrane segment at 430–450 (MLQYPVAIILPVLMHTAIEFH) threads the bilayer. The Extracellular segment spans residues 451 to 481 (KWTTSTMANRDEMCFHNHACARPLGELRAWN). Residues 482 to 502 (NIITNIGYTLYGAIFIVLSIC) traverse the membrane as a helical segment. At 503–510 (RRGRHEYS) the chain is on the cytoplasmic side. A helical transmembrane segment spans residues 511-531 (HVFGTYECTLLDVTIGVFMVL). Residues 532–543 (QSIASATYHICP) lie on the Extracellular side of the membrane. Residues 544–564 (SDVAFQFDTPCIQVICGLLMV) traverse the membrane as a helical segment. Topologically, residues 565–575 (RQWFVRHESPS) are cytoplasmic. The chain crosses the membrane as a helical span at residues 576–596 (PAYTNILLVGVVSLNFLISAF). Residues 597-599 (SKT) lie on the Extracellular side of the membrane. A helical membrane pass occupies residues 600 to 620 (SYVRFIIAVIHVIVVGSICLA). The Cytoplasmic portion of the chain corresponds to 621-633 (KERSLGSEKLKTR). Residues 634–654 (FFIMAFSMGNFAAIVMYLTLS) form a helical membrane-spanning segment. Over 655–659 (AFHLN) the chain is Extracellular. Residues 660–680 (QIATYCFIINCIMYLMYYGCM) traverse the membrane as a helical segment. The Cytoplasmic portion of the chain corresponds to 681–691 (KVLHSERITSK). A helical membrane pass occupies residues 692-712 (AKLCGALSLLAWAVAGFFFFQ). Over 713–741 (DDTDWTRSAAASRALNKPCLLLGFFGSHD) the chain is Extracellular. The chain crosses the membrane as a helical span at residues 742-762 (LWHIFGALAGLFTFIFVSFVD). The Cytoplasmic segment spans residues 763–776 (DDLINTRKTSINIF).

The protein belongs to the SID1 family. As to quaternary structure, may self-associate to form multimers. Expressed in most non-neuronal cells, including body wall muscle cells.

It is found in the cell membrane. Functionally, plays a role in RNA-mediated gene silencing by acting cell-autonomously as a channel for the transport of double-stranded RNA (dsRNA) between cells. Mediates the spread of dsRNA and subsequent silencing of genes in cells distant from the site of dsRNA introduction. Selective for dsRNA. Preferentially binds long dsRNA, from 50 base pairs up to 700. Short 20 base-pair long molecules are not bound. May also bind dsDNA, but with lower affinity. Binding may be sequence-independent. Required for avoidance behavior induced by small RNAs derived from pathogenic bacteria such as P.aeruginosa. In Caenorhabditis elegans, this protein is Systemic RNA interference defective protein 1.